We begin with the raw amino-acid sequence, 699 residues long: Elongation factor G 1 (699 aa).

The tr-type G domain occupies 8–290 (ERYRNIGICA…AVIEYLPSPI (283 aa)). GTP is bound by residues 17–24 (AHVDAGKT), 88–92 (DTPGH), and 142–145 (NKMD).

The protein belongs to the TRAFAC class translation factor GTPase superfamily. Classic translation factor GTPase family. EF-G/EF-2 subfamily.

It localises to the cytoplasm. Its function is as follows. Catalyzes the GTP-dependent ribosomal translocation step during translation elongation. During this step, the ribosome changes from the pre-translocational (PRE) to the post-translocational (POST) state as the newly formed A-site-bound peptidyl-tRNA and P-site-bound deacylated tRNA move to the P and E sites, respectively. Catalyzes the coordinated movement of the two tRNA molecules, the mRNA and conformational changes in the ribosome. The protein is Elongation factor G 1 of Vibrio vulnificus (strain YJ016).